A 418-amino-acid polypeptide reads, in one-letter code: E3 ubiquitin-protein ligase pellino homolog 1 (418 aa).

The region spanning 13 to 200 (APVKYGELIV…MHPRNGFTED (188 aa)) is the FHA; atypical domain. Residue Ser-121 is modified to Phosphoserine; by ATM. Thr-127 carries the post-translational modification Phosphothreonine; by ATM. Residues 311–399 (CGHVHGYHNW…TFHAACPFCA (89 aa)) form a ring-like domain; necessary for ubiqitination of RIPK3 region.

Belongs to the pellino family. As to quaternary structure, interacts with MAP3K7. Upon IL1B treatment, forms a complex with TRAF6, IRAK1, IRAK4 and MYD88; this complex recruits MAP3K7/TAK1, TAB1 and TAB2 to mediate NF-kappa-B activation. Direct binding of SMAD6 to PELI1 prevents the complex formation and hence negatively regulates IL1R-TLR signaling and eventually NF-kappa-B-mediated gene expression. Interacts (via atypical FHA domain) with RIPK3; preferentially binds to the 'Thr-182' phosphorylated form of RIPK3. Interacts with RIPK1 and IRAK1. In terms of processing, phosphorylation by IRAK1 and IRAK4 enhances its E3 ligase activity. Phosphorylated by ATM in response to DNA damage, promoting localization to DNA double-strand breaks (DSBs) and ability to mediate 'Lys-63'-linked ubiquitination of NBN. Sumoylated. As to expression, expressed at high levels in normal skin but decreased in keratinocytes from toxic epidermal necrolysis (TEN) patients (at protein level).

Its subcellular location is the chromosome. It catalyses the reaction S-ubiquitinyl-[E2 ubiquitin-conjugating enzyme]-L-cysteine + [acceptor protein]-L-lysine = [E2 ubiquitin-conjugating enzyme]-L-cysteine + N(6)-ubiquitinyl-[acceptor protein]-L-lysine.. It functions in the pathway protein modification; protein ubiquitination. Functionally, E3 ubiquitin ligase catalyzing the covalent attachment of ubiquitin moieties onto substrate proteins. Involved in the TLR and IL-1 signaling pathways via interaction with the complex containing IRAK kinases and TRAF6. Acts as a positive regulator of inflammatory response in microglia through activation of NF-kappa-B and MAP kinase. Mediates 'Lys-63'-linked polyubiquitination of IRAK1 allowing subsequent NF-kappa-B activation. Conjugates 'Lys-63'-linked ubiquitin chains to the adapter protein ASC/PYCARD, which in turn is crucial for NLRP3 inflammasome activation. Mediates 'Lys-48'-linked polyubiquitination of RIPK3 leading to its subsequent proteasome-dependent degradation; preferentially recognizes and mediates the degradation of the 'Thr-182' phosphorylated form of RIPK3. Negatively regulates necroptosis by reducing RIPK3 expression. Mediates 'Lys-63'-linked ubiquitination of RIPK1. Following phosphorylation by ATM, catalyzes 'Lys-63'-linked ubiquitination of NBN, promoting DNA repair via homologous recombination. Negatively regulates activation of the metabolic mTORC1 signaling pathway by mediating 'Lys-63'-linked ubiquitination of mTORC1-inhibitory protein TSC1 and thereby promoting TSC1/TSC2 complex stability. The protein is E3 ubiquitin-protein ligase pellino homolog 1 of Homo sapiens (Human).